A 328-amino-acid chain; its full sequence is 4-hydroxythreonine-4-phosphate dehydrogenase (328 aa).

Residues His135 and Thr136 each coordinate substrate. A divalent metal cation is bound by residues His165, His210, and His265. Residues Lys273, Asn282, and Arg291 each contribute to the substrate site.

It belongs to the PdxA family. As to quaternary structure, homodimer. It depends on Zn(2+) as a cofactor. Requires Mg(2+) as cofactor. Co(2+) is required as a cofactor.

Its subcellular location is the cytoplasm. It catalyses the reaction 4-(phosphooxy)-L-threonine + NAD(+) = 3-amino-2-oxopropyl phosphate + CO2 + NADH. It participates in cofactor biosynthesis; pyridoxine 5'-phosphate biosynthesis; pyridoxine 5'-phosphate from D-erythrose 4-phosphate: step 4/5. Catalyzes the NAD(P)-dependent oxidation of 4-(phosphooxy)-L-threonine (HTP) into 2-amino-3-oxo-4-(phosphooxy)butyric acid which spontaneously decarboxylates to form 3-amino-2-oxopropyl phosphate (AHAP). This chain is 4-hydroxythreonine-4-phosphate dehydrogenase, found in Enterobacter sp. (strain 638).